Reading from the N-terminus, the 1155-residue chain is DNA-directed RNA polymerase subunit beta (1155 aa).

It belongs to the RNA polymerase beta chain family. The RNAP catalytic core consists of 2 alpha, 1 beta, 1 beta' and 1 omega subunit. When a sigma factor is associated with the core the holoenzyme is formed, which can initiate transcription.

The catalysed reaction is RNA(n) + a ribonucleoside 5'-triphosphate = RNA(n+1) + diphosphate. DNA-dependent RNA polymerase catalyzes the transcription of DNA into RNA using the four ribonucleoside triphosphates as substrates. The polypeptide is DNA-directed RNA polymerase subunit beta (Borreliella burgdorferi (strain ZS7) (Borrelia burgdorferi)).